The sequence spans 171 residues: MPRSQRNDNFIDKTFTVVADILLKVLPTTRREKEAFTYYRDGMSAQAEGEYAEALQNYYEAMRLEVDAYDRSYILYNIGLIHTSNGEHAKALEYYYQALERNPYLPQALNNIAVIYHYRGEQAIESGNSRISNLLFDKAADYWKEAIRLAPTNYIEAQNWLKITNRLEEAI.

3 TPR repeats span residues 35–68, 72–105, and 120–153; these read AFTY…EVDA, SYIL…NPYL, and GEQA…APTN.

Belongs to the Ycf3 family.

The protein resides in the plastid. It localises to the chloroplast thylakoid membrane. Functionally, essential for the assembly of the photosystem I (PSI) complex. May act as a chaperone-like factor to guide the assembly of the PSI subunits. In Nephroselmis olivacea (Green alga), this protein is Photosystem I assembly protein Ycf3.